The chain runs to 173 residues: Alpha-crystallin A chain (173 aa).

Residue M1 is modified to N-acetylmethionine. The segment at 1–63 (MDVTIQHPWF…RTVLDSGVSE (63 aa)) is required for complex formation with BFSP1 and BFSP2. Q6 carries the deamidated glutamine; partial modification. Phosphoserine is present on S45. Residue Q50 is modified to Deamidated glutamine; partial. A sHSP domain is found at 52–162 (LFRTVLDSGV…GHSERAIPVS (111 aa)). An N6-acetyllysine modification is found at K70. Q90 is modified (deamidated glutamine; partial). An N6-acetyllysine modification is found at K99. H100 lines the Zn(2+) pocket. At N101 the chain carries Deamidated asparagine; partial. Residues E102 and H107 each contribute to the Zn(2+) site. At S122 the chain carries Phosphoserine. N123 is modified (deamidated asparagine; partial). The interval 144 to 173 (PKVQSGLDAGHSERAIPVSREEKPSSAPSS) is disordered. Residue Q147 is modified to Deamidated glutamine; partial. The span at 153 to 167 (GHSERAIPVSREEKP) shows a compositional bias: basic and acidic residues. H154 is a Zn(2+) binding site. Residue S162 is glycosylated (O-linked (GlcNAc) serine).

The protein belongs to the small heat shock protein (HSP20) family. Heteromer composed of three CRYAA and one CRYAB subunits. Inter-subunit bridging via zinc ions enhances stability, which is crucial as there is no protein turn over in the lens. Can also form homodimers and homotetramers (dimers of dimers) which serve as the building blocks of homooligomers. Within homooligomers, the zinc-binding motif is created from residues of 3 different molecules. His-100 and Glu-102 from one molecule are ligands of the zinc ion, and His-107 and His-154 residues from additional molecules complete the site with tetrahedral coordination geometry. Part of a complex required for lens intermediate filament formation composed of BFSP1, BFSP2 and CRYAA. Post-translationally, acetylation at Lys-70 may increase chaperone activity. In terms of processing, undergoes age-dependent proteolytical cleavage at the C-terminus.

The protein localises to the cytoplasm. It is found in the nucleus. In terms of biological role, contributes to the transparency and refractive index of the lens. Acts as a chaperone, preventing aggregation of various proteins under a wide range of stress conditions. Required for the correct formation of lens intermediate filaments as part of a complex composed of BFSP1, BFSP2 and CRYAA. This is Alpha-crystallin A chain (CRYAA) from Otolemur crassicaudatus (Brown greater galago).